Consider the following 481-residue polypeptide: Aspartyl/glutamyl-tRNA(Asn/Gln) amidotransferase subunit B (481 aa).

This sequence belongs to the GatB/GatE family. GatB subfamily. As to quaternary structure, heterotrimer of A, B and C subunits.

It catalyses the reaction L-glutamyl-tRNA(Gln) + L-glutamine + ATP + H2O = L-glutaminyl-tRNA(Gln) + L-glutamate + ADP + phosphate + H(+). The enzyme catalyses L-aspartyl-tRNA(Asn) + L-glutamine + ATP + H2O = L-asparaginyl-tRNA(Asn) + L-glutamate + ADP + phosphate + 2 H(+). Its function is as follows. Allows the formation of correctly charged Asn-tRNA(Asn) or Gln-tRNA(Gln) through the transamidation of misacylated Asp-tRNA(Asn) or Glu-tRNA(Gln) in organisms which lack either or both of asparaginyl-tRNA or glutaminyl-tRNA synthetases. The reaction takes place in the presence of glutamine and ATP through an activated phospho-Asp-tRNA(Asn) or phospho-Glu-tRNA(Gln). The chain is Aspartyl/glutamyl-tRNA(Asn/Gln) amidotransferase subunit B from Ehrlichia ruminantium (strain Gardel).